We begin with the raw amino-acid sequence, 271 residues long: Chitinase 6 (271 aa).

Residues M1 to A20 form the signal peptide. Residues A25–V60 form the Chitin-binding type-1 domain. 6 cysteine pairs are disulfide-bonded: C28–C36, C30–C42, C35–C49, C88–C137, C150–C159, and C239–C271. The active-site Proton donor is E132. N268 carries an N-linked (GlcNAc...) asparagine glycan.

The protein belongs to the glycosyl hydrolase 19 family. Chitinase class IV subfamily. Expressed in roots, leaves, sheaths and meristems.

The catalysed reaction is Random endo-hydrolysis of N-acetyl-beta-D-glucosaminide (1-&gt;4)-beta-linkages in chitin and chitodextrins.. Its function is as follows. May function in reproductive organs during embryogenesis and seed maturation. The sequence is that of Chitinase 6 (Cht6) from Oryza sativa subsp. japonica (Rice).